The sequence spans 165 residues: NAD(P)H-quinone oxidoreductase subunit I, chloroplastic (165 aa).

4Fe-4S ferredoxin-type domains follow at residues 55–84 (GRIHFEFDKCIACEVCVRVCPINLPVVDWE) and 95–124 (KSYSIDFGVCIFCGNCVEYCPTNCLSMTEE). Positions 64, 67, 70, 74, 104, 107, 110, and 114 each coordinate [4Fe-4S] cluster.

The protein belongs to the complex I 23 kDa subunit family. As to quaternary structure, NDH is composed of at least 16 different subunits, 5 of which are encoded in the nucleus. The cofactor is [4Fe-4S] cluster.

The protein resides in the plastid. It localises to the chloroplast thylakoid membrane. It catalyses the reaction a plastoquinone + NADH + (n+1) H(+)(in) = a plastoquinol + NAD(+) + n H(+)(out). The enzyme catalyses a plastoquinone + NADPH + (n+1) H(+)(in) = a plastoquinol + NADP(+) + n H(+)(out). NDH shuttles electrons from NAD(P)H:plastoquinone, via FMN and iron-sulfur (Fe-S) centers, to quinones in the photosynthetic chain and possibly in a chloroplast respiratory chain. The immediate electron acceptor for the enzyme in this species is believed to be plastoquinone. Couples the redox reaction to proton translocation, and thus conserves the redox energy in a proton gradient. This Psilotum nudum (Whisk fern) protein is NAD(P)H-quinone oxidoreductase subunit I, chloroplastic.